The sequence spans 241 residues: Uridylate kinase (241 aa).

Residue 12-15 (KLSG) coordinates ATP. Residues 20–25 (GATGYG) form an involved in allosteric activation by GTP region. G54 contacts UMP. 2 residues coordinate ATP: G55 and R59. Residues D74 and 135-142 (TGNPYMTT) contribute to the UMP site. 3 residues coordinate ATP: N163, Y169, and D172.

Belongs to the UMP kinase family. Homohexamer.

Its subcellular location is the cytoplasm. The enzyme catalyses UMP + ATP = UDP + ADP. It participates in pyrimidine metabolism; CTP biosynthesis via de novo pathway; UDP from UMP (UMPK route): step 1/1. Allosterically activated by GTP. Inhibited by UTP. Catalyzes the reversible phosphorylation of UMP to UDP. This is Uridylate kinase from Dehalococcoides mccartyi (strain CBDB1).